Reading from the N-terminus, the 234-residue chain is Demethylmenaquinone methyltransferase (234 aa).

S-adenosyl-L-methionine contacts are provided by residues Thr-58, Asp-79, and 106–107; that span reads NA.

Belongs to the class I-like SAM-binding methyltransferase superfamily. MenG/UbiE family.

It catalyses the reaction a 2-demethylmenaquinol + S-adenosyl-L-methionine = a menaquinol + S-adenosyl-L-homocysteine + H(+). It functions in the pathway quinol/quinone metabolism; menaquinone biosynthesis; menaquinol from 1,4-dihydroxy-2-naphthoate: step 2/2. Methyltransferase required for the conversion of demethylmenaquinol (DMKH2) to menaquinol (MKH2). The protein is Demethylmenaquinone methyltransferase of Bacillus pumilus (strain SAFR-032).